The chain runs to 351 residues: MLYSLVKKYLFSLDAEDAHEKVCKILRMLSSSPFLCNLIDSQWGYKNPKLENEILGLHFPNPLGLAAGFDKNASMLRALTAFGFGYLEAGTLTNEAQMGNERPRLFRHIEEESLQNAMGFNNYGAVLGARSFKRFAPYKTPIGINLGKNKHIEQAHALEDYKAVLNQCLNIGDYYTFNLSSPNTPNLRDLQNKAFVHELFCMAKEMTHKPLFLKIAPDLETDDMLEIVNSAIEAGAHGIIATNTTIDKSLVFAPKEMGGLSGKCLTKKSREIFKELAKAFFNKTILVSVGGISGAKEAYERIKMGASLLQIYSAFIYNGPNLCQNILKDLVKLLQKDGFLSVKEAIGADLR.

Residues 67-71 (AGFDK) and Thr91 each bind FMN. Lys71 lines the substrate pocket. 116-120 (NAMGF) contacts substrate. Residues Asn145 and Asn178 each coordinate FMN. Residue Asn178 coordinates substrate. The active-site Nucleophile is the Ser181. Asn183 serves as a coordination point for substrate. Residues Lys214 and Thr242 each contribute to the FMN site. 243 to 244 (NT) is a substrate binding site. Residues Gly262, Gly291, and 312-313 (YS) each bind FMN.

The protein belongs to the dihydroorotate dehydrogenase family. Type 2 subfamily. As to quaternary structure, monomer. Requires FMN as cofactor.

Its subcellular location is the cell membrane. It catalyses the reaction (S)-dihydroorotate + a quinone = orotate + a quinol. The protein operates within pyrimidine metabolism; UMP biosynthesis via de novo pathway; orotate from (S)-dihydroorotate (quinone route): step 1/1. Functionally, catalyzes the conversion of dihydroorotate to orotate with quinone as electron acceptor. This is Dihydroorotate dehydrogenase (quinone) from Helicobacter pylori (strain HPAG1).